A 396-amino-acid polypeptide reads, in one-letter code: Elongation factor Tu (396 aa).

Residues 10-206 (KPHCNIGTIG…NVDEYIPQPE (197 aa)) enclose the tr-type G domain. Positions 19–26 (GHVDHGKT) are G1. GTP is bound at residue 19–26 (GHVDHGKT). Thr26 serves as a coordination point for Mg(2+). Residues 60-64 (GITIS) form a G2 region. The G3 stretch occupies residues 81-84 (DCPG). Residues 81–85 (DCPGH) and 136–139 (NKCD) each bind GTP. The tract at residues 136–139 (NKCD) is G4. The segment at 174 to 176 (SAL) is G5.

This sequence belongs to the TRAFAC class translation factor GTPase superfamily. Classic translation factor GTPase family. EF-Tu/EF-1A subfamily. Monomer.

The protein resides in the cytoplasm. It carries out the reaction GTP + H2O = GDP + phosphate + H(+). Functionally, GTP hydrolase that promotes the GTP-dependent binding of aminoacyl-tRNA to the A-site of ribosomes during protein biosynthesis. This is Elongation factor Tu from Afipia carboxidovorans (strain ATCC 49405 / DSM 1227 / KCTC 32145 / OM5) (Oligotropha carboxidovorans).